The sequence spans 314 residues: Methionyl-tRNA formyltransferase (314 aa).

Residue 110–113 (SLLP) participates in (6S)-5,6,7,8-tetrahydrofolate binding.

This sequence belongs to the Fmt family.

The enzyme catalyses L-methionyl-tRNA(fMet) + (6R)-10-formyltetrahydrofolate = N-formyl-L-methionyl-tRNA(fMet) + (6S)-5,6,7,8-tetrahydrofolate + H(+). In terms of biological role, attaches a formyl group to the free amino group of methionyl-tRNA(fMet). The formyl group appears to play a dual role in the initiator identity of N-formylmethionyl-tRNA by promoting its recognition by IF2 and preventing the misappropriation of this tRNA by the elongation apparatus. The chain is Methionyl-tRNA formyltransferase from Levilactobacillus brevis (strain ATCC 367 / BCRC 12310 / CIP 105137 / JCM 1170 / LMG 11437 / NCIMB 947 / NCTC 947) (Lactobacillus brevis).